Reading from the N-terminus, the 211-residue chain is Transcription antitermination protein NusB (211 aa).

Belongs to the NusB family.

In terms of biological role, involved in transcription antitermination. Required for transcription of ribosomal RNA (rRNA) genes. Binds specifically to the boxA antiterminator sequence of the ribosomal RNA (rrn) operons. The polypeptide is Transcription antitermination protein NusB (Gloeobacter violaceus (strain ATCC 29082 / PCC 7421)).